The following is a 609-amino-acid chain: Replication protein A 70 kDa DNA-binding subunit (609 aa).

The tract at residues 113–163 is disordered; it reads GNPQPYNDGQPQPAAPAPASAPAPAPSKLQNNSAPPPSMNRGTSKLFGGGS. Pro residues predominate over residues 125–137; the sequence is PAAPAPASAPAPA. The segment at residues 188–272 is a DNA-binding region (OB); the sequence is WTVRARVTNK…VKNDYEMTFN (85 aa). A C4-type zinc finger spans residues 472–494; it reads CPSQDCNKKVIDQQNGLFRCEKC.

The protein belongs to the replication factor A protein 1 family. Component of the heterotrimeric canonical replication protein A complex (RPA). Interacts with rpain-a.

Its subcellular location is the nucleus. It is found in the PML body. As part of the heterotrimeric replication protein A complex (RPA/RP-A), binds and stabilizes single-stranded DNA intermediates, that form during DNA replication or upon DNA stress. It prevents their reannealing and in parallel, recruits and activates different proteins and complexes involved in DNA metabolism. Thereby, it plays an essential role both in DNA replication and the cellular response to DNA damage. This chain is Replication protein A 70 kDa DNA-binding subunit (rpa1), found in Xenopus laevis (African clawed frog).